We begin with the raw amino-acid sequence, 208 residues long: MTGILAVQGAFAEHAAMLDHLGAPWKLLRAAEDFDDSIDRVILPGGESTTQGKLLRSTGLFEPIAEHIAAGKPVFGTCAGMILLARKLDNDDNVYFGALDAVVRRNAYGRQLGSFAATADFGSSSGDSAVVVAPGEHVPQDAPADIVLKDFPLVFIRGPFVAEVGPAATVETSVDGNVVGLRQGKILATAFHPELTDDTRIHELFLSL.

L-glutamine is bound at residue 46-48 (GES). Cys78 (nucleophile) is an active-site residue. Residues Arg105 and 156–157 (IR) contribute to the L-glutamine site. Active-site charge relay system residues include His192 and Glu194.

Belongs to the glutaminase PdxT/SNO family. In the presence of PdxS, forms a dodecamer of heterodimers. Only shows activity in the heterodimer.

It carries out the reaction aldehydo-D-ribose 5-phosphate + D-glyceraldehyde 3-phosphate + L-glutamine = pyridoxal 5'-phosphate + L-glutamate + phosphate + 3 H2O + H(+). The catalysed reaction is L-glutamine + H2O = L-glutamate + NH4(+). Its pathway is cofactor biosynthesis; pyridoxal 5'-phosphate biosynthesis. Its function is as follows. Catalyzes the hydrolysis of glutamine to glutamate and ammonia as part of the biosynthesis of pyridoxal 5'-phosphate. The resulting ammonia molecule is channeled to the active site of PdxS. The protein is Pyridoxal 5'-phosphate synthase subunit PdxT of Bifidobacterium adolescentis (strain ATCC 15703 / DSM 20083 / NCTC 11814 / E194a).